The following is a 433-amino-acid chain: uncharacterized protein (433 aa).

The tract at residues 1 to 126 (MAAHIALIAH…VIKLLGKTKT (126 aa)) is methylglyoxal synthase. Positions 1–145 (MAAHIALIAH…GQGNVERELD (145 aa)) constitute an MGS-like domain. The active site involves D62. The DAGKc domain occupies 127 to 262 (GHLIFNPVAG…VDTALCNDIP (136 aa)).

This sequence in the N-terminal section; belongs to the methylglyoxal synthase family.

This is an uncharacterized protein from Synechocystis sp. (strain ATCC 27184 / PCC 6803 / Kazusa).